The sequence spans 184 residues: dTTP/UTP pyrophosphatase (184 aa).

Catalysis depends on aspartate 65, which acts as the Proton acceptor.

Belongs to the Maf family. YhdE subfamily. It depends on a divalent metal cation as a cofactor.

Its subcellular location is the cytoplasm. The catalysed reaction is dTTP + H2O = dTMP + diphosphate + H(+). The enzyme catalyses UTP + H2O = UMP + diphosphate + H(+). Functionally, nucleoside triphosphate pyrophosphatase that hydrolyzes dTTP and UTP. May have a dual role in cell division arrest and in preventing the incorporation of modified nucleotides into cellular nucleic acids. In Thermococcus onnurineus (strain NA1), this protein is dTTP/UTP pyrophosphatase.